A 622-amino-acid chain; its full sequence is Kelch-like protein 14 (622 aa).

The region spanning cysteine 33–leucine 145 is the BTB domain. The tract at residues alanine 73–lysine 108 is disordered. Pro residues predominate over residues proline 87–glutamate 96. 6 Kelch repeats span residues methionine 317–asparagine 366, phenylalanine 367–lysine 418, asparagine 419–glycine 465, isoleucine 467–aspartate 512, leucine 514–aspartate 564, and isoleucine 566–leucine 614.

The protein resides in the cytoplasm. Its subcellular location is the cytosol. It is found in the endoplasmic reticulum membrane. This Gallus gallus (Chicken) protein is Kelch-like protein 14 (KLHL14).